We begin with the raw amino-acid sequence, 55 residues long: ATP synthase F(0) complex subunit 8 (55 aa).

Residues 4-24 (LNPSPWFIILLFSWVIFMVIL) traverse the membrane as a helical segment.

It belongs to the ATPase protein 8 family. In terms of assembly, component of the ATP synthase complex composed at least of ATP5F1A/subunit alpha, ATP5F1B/subunit beta, ATP5MC1/subunit c (homooctomer), MT-ATP6/subunit a, MT-ATP8/subunit 8, ATP5ME/subunit e, ATP5MF/subunit f, ATP5MG/subunit g, ATP5MK/subunit k, ATP5MJ/subunit j, ATP5F1C/subunit gamma, ATP5F1D/subunit delta, ATP5F1E/subunit epsilon, ATP5PF/subunit F6, ATP5PB/subunit b, ATP5PD/subunit d, ATP5PO/subunit OSCP. ATP synthase complex consists of a soluble F(1) head domain (subunits alpha(3) and beta(3)) - the catalytic core - and a membrane F(0) domain - the membrane proton channel (subunits c, a, 8, e, f, g, k and j). These two domains are linked by a central stalk (subunits gamma, delta, and epsilon) rotating inside the F1 region and a stationary peripheral stalk (subunits F6, b, d, and OSCP).

It localises to the mitochondrion membrane. Functionally, subunit 8, of the mitochondrial membrane ATP synthase complex (F(1)F(0) ATP synthase or Complex V) that produces ATP from ADP in the presence of a proton gradient across the membrane which is generated by electron transport complexes of the respiratory chain. ATP synthase complex consist of a soluble F(1) head domain - the catalytic core - and a membrane F(1) domain - the membrane proton channel. These two domains are linked by a central stalk rotating inside the F(1) region and a stationary peripheral stalk. During catalysis, ATP synthesis in the catalytic domain of F(1) is coupled via a rotary mechanism of the central stalk subunits to proton translocation. In vivo, can only synthesize ATP although its ATP hydrolase activity can be activated artificially in vitro. Part of the complex F(0) domain. The protein is ATP synthase F(0) complex subunit 8 of Scyliorhinus canicula (Small-spotted catshark).